The chain runs to 303 residues: Inosose dehydratase (303 aa).

This sequence belongs to the IolE/MocC family. Glutathione is required as a cofactor. It depends on Co(2+) as a cofactor. The cofactor is Mn(2+).

The enzyme catalyses scyllo-inosose = 3D-3,5/4-trihydroxycyclohexane-1,2-dione + H2O. The protein operates within polyol metabolism; myo-inositol degradation into acetyl-CoA; acetyl-CoA from myo-inositol: step 2/7. Its function is as follows. Catalyzes the dehydration of inosose (2-keto-myo-inositol, 2KMI or 2,4,6/3,5-pentahydroxycyclohexanone) to 3D-(3,5/4)-trihydroxycyclohexane-1,2-dione (D-2,3-diketo-4-deoxy-epi-inositol). This chain is Inosose dehydratase, found in Halalkalibacterium halodurans (strain ATCC BAA-125 / DSM 18197 / FERM 7344 / JCM 9153 / C-125) (Bacillus halodurans).